The following is an 820-amino-acid chain: Potassium channel GORK (820 aa).

Topologically, residues 1-69 (MGRLRRRQEI…PKNRWYKAWE (69 aa)) are cytoplasmic. A helical membrane pass occupies residues 70–90 (MFILVWAIYSSLFTPMEFGFF). Residues 91–97 (RGLPERL) lie on the Extracellular side of the membrane. A helical membrane pass occupies residues 98–118 (FVLDIVGQIAFLVDIVLQFFV). Residues 119 to 141 (AYRDTQTYRTVYKPTRIAFRYLK) are Cytoplasmic-facing. Residues 142-162 (SHFLMDFIGCFPWDLIYKASG) form a helical membrane-spanning segment. Residues 163 to 168 (KHELVR) lie on the Extracellular side of the membrane. Residues 169-189 (YLLWIRLFRVRKVVEFFQRLE) traverse the membrane as a helical; Voltage-sensor segment. Over 190–203 (KDTRINYLFTRILK) the chain is Cytoplasmic. A helical transmembrane segment spans residues 204–224 (LLFVEVYCTHTAACIFYYLAT). Topologically, residues 225 to 259 (TLPPENEGYTWIGSLKLGDYSYENFREIDLWKRYT) are extracellular. The segment at residues 260–279 (TALYFAIVTMATVGYGDIHA) is an intramembrane region (pore-forming). Topologically, residues 280–285 (VNLREM) are extracellular. The helical transmembrane segment at 286–306 (IFVMIYVSFDMVLGAYLIGNI) threads the bilayer. Topologically, residues 307–820 (TALIVKGSNT…YMISDTTDQT (514 aa)) are cytoplasmic. 386–508 (LFKGCSTEFI…ILNNIMEEKE (123 aa)) is an a nucleoside 3',5'-cyclic phosphate binding site. ANK repeat units lie at residues 528–559 (EAEL…DPNK), 563–592 (DGRS…DVNL), 596–625 (FGHT…SFNL), 627–656 (DSGN…NPNS), 660–689 (DHRT…SVIS), and 693–722 (WGNS…AQSS). The KHA domain maps to 740–820 (KCTVFPFHPQ…YMISDTTDQT (81 aa)).

The protein belongs to the potassium channel family. Plant (TC 1.A.1.4) subfamily. As to quaternary structure, the potassium channel is probably composed of a homo- or heterotetrameric complex of pore-forming subunits. In terms of tissue distribution, expressed in guard cell-containing tissues, in root epidermal cells and in root hairs. Detected in vascular cells of the root and shoot.

The protein resides in the membrane. Its function is as follows. Major selective outward-rectifying potassium channel of the guard cell membrane. Involved in regulation of stomatal movements according to the water status. Assuming opened or closed conformations in response to the voltage difference across the membrane, the channel is activated by depolarization. Conductance of the channel is modulated in a potassium-dependent fashion. May interact with the cytoskeleton or with regulatory proteins. The sequence is that of Potassium channel GORK (GORK) from Arabidopsis thaliana (Mouse-ear cress).